Reading from the N-terminus, the 152-residue chain is Nucleoside diphosphate kinase (152 aa).

Lys9, Phe57, Arg85, Thr91, Arg102, and Asn112 together coordinate ATP. His115 acts as the Pros-phosphohistidine intermediate in catalysis.

Belongs to the NDK family. In terms of assembly, homotetramer. The cofactor is Mg(2+).

The protein resides in the cytoplasm. It catalyses the reaction a 2'-deoxyribonucleoside 5'-diphosphate + ATP = a 2'-deoxyribonucleoside 5'-triphosphate + ADP. The catalysed reaction is a ribonucleoside 5'-diphosphate + ATP = a ribonucleoside 5'-triphosphate + ADP. Its function is as follows. Major role in the synthesis of nucleoside triphosphates other than ATP. The ATP gamma phosphate is transferred to the NDP beta phosphate via a ping-pong mechanism, using a phosphorylated active-site intermediate. The sequence is that of Nucleoside diphosphate kinase from Rhodopirellula baltica (strain DSM 10527 / NCIMB 13988 / SH1).